We begin with the raw amino-acid sequence, 238 residues long: 3-dehydroquinate dehydratase (238 aa).

Residues 35–37 (ELR) and arginine 70 each bind 3-dehydroquinate. Residue histidine 133 is the Proton donor/acceptor of the active site. The Schiff-base intermediate with substrate role is filled by lysine 160. 3-dehydroquinate is bound by residues arginine 202 and glutamine 225.

It belongs to the type-I 3-dehydroquinase family. As to quaternary structure, homodimer.

The enzyme catalyses 3-dehydroquinate = 3-dehydroshikimate + H2O. Its pathway is metabolic intermediate biosynthesis; chorismate biosynthesis; chorismate from D-erythrose 4-phosphate and phosphoenolpyruvate: step 3/7. Its function is as follows. Involved in the third step of the chorismate pathway, which leads to the biosynthesis of aromatic amino acids. Catalyzes the cis-dehydration of 3-dehydroquinate (DHQ) and introduces the first double bond of the aromatic ring to yield 3-dehydroshikimate. This chain is 3-dehydroquinate dehydratase, found in Staphylococcus aureus (strain MSSA476).